Here is a 698-residue protein sequence, read N- to C-terminus: Inner centromere protein SLI15 (698 aa).

Position 268 is a phosphoserine (serine 268). 3 disordered regions span residues 365-390 (KNKI…FDKT), 405-444 (EQKK…EVKN), and 455-474 (RPTK…TSQT). Polar residues-rich tracts occupy residues 422–439 (RPHS…SSPS) and 459–474 (ASIS…TSQT). At serine 489 the chain carries Phosphoserine. The segment at 535–560 (IMRSQQEHHRRKQEKQKRMSHLEQDL) is disordered. Positions 550–560 (QKRMSHLEQDL) are enriched in basic and acidic residues.

Belongs to the INCENP family. As to quaternary structure, component of the CPC complex at least composed of IPL1, BIR1 and SLI15. Phosphorylated by serine/threonine protein kinase IPL1.

It is found in the nucleus. The protein resides in the cytoplasm. Its subcellular location is the cytoskeleton. It localises to the spindle. The protein localises to the chromosome. It is found in the centromere. The protein resides in the kinetochore. Its function is as follows. Component of the chromosomal passenger complex (CPC), a complex that acts as a key regulator of mitosis. Stimulates IPL1 kinase activity and facilitates its association with the mitotic spindle. Has a role in attaching the kinetochores to the microtubules and ensuring that sister kinetochores connect to opposite poles. In Saccharomyces cerevisiae (strain ATCC 204508 / S288c) (Baker's yeast), this protein is Inner centromere protein SLI15 (SLI15).